Consider the following 390-residue polypeptide: GTPase Obg (390 aa).

An Obg domain is found at 1–159 (MKFVDEASIL…RDLLLELMLL (159 aa)). The tract at residues 127–147 (NTRFKSSVNRTPRQKTNGTPG) is disordered. Residues 129–145 (RFKSSVNRTPRQKTNGT) are compositionally biased toward polar residues. In terms of domain architecture, OBG-type G spans 160–333 (ADVGMLGMPN…LCWDVMTFII (174 aa)). GTP-binding positions include 166–173 (GMPNAGKS), 191–195 (FTTLV), 213–216 (DIPG), 283–286 (NKID), and 314–316 (SAA). Positions 173 and 193 each coordinate Mg(2+).

It belongs to the TRAFAC class OBG-HflX-like GTPase superfamily. OBG GTPase family. As to quaternary structure, monomer. Mg(2+) is required as a cofactor.

It localises to the cytoplasm. Its function is as follows. An essential GTPase which binds GTP, GDP and possibly (p)ppGpp with moderate affinity, with high nucleotide exchange rates and a fairly low GTP hydrolysis rate. Plays a role in control of the cell cycle, stress response, ribosome biogenesis and in those bacteria that undergo differentiation, in morphogenesis control. The polypeptide is GTPase Obg (Salmonella paratyphi A (strain ATCC 9150 / SARB42)).